A 137-amino-acid chain; its full sequence is Small ribosomal subunit protein uS12 (137 aa).

The interval 1–23 is disordered; the sequence is MPTINQLVRKGRKSKSSKSDAPA. Asp102 carries the post-translational modification 3-methylthioaspartic acid.

It belongs to the universal ribosomal protein uS12 family. Part of the 30S ribosomal subunit. Contacts proteins S8 and S17. May interact with IF1 in the 30S initiation complex.

In terms of biological role, with S4 and S5 plays an important role in translational accuracy. Its function is as follows. Interacts with and stabilizes bases of the 16S rRNA that are involved in tRNA selection in the A site and with the mRNA backbone. Located at the interface of the 30S and 50S subunits, it traverses the body of the 30S subunit contacting proteins on the other side and probably holding the rRNA structure together. The combined cluster of proteins S8, S12 and S17 appears to hold together the shoulder and platform of the 30S subunit. The chain is Small ribosomal subunit protein uS12 from Levilactobacillus brevis (strain ATCC 367 / BCRC 12310 / CIP 105137 / JCM 1170 / LMG 11437 / NCIMB 947 / NCTC 947) (Lactobacillus brevis).